We begin with the raw amino-acid sequence, 362 residues long: Ciliary neurotrophic factor receptor subunit alpha (362 aa).

The N-terminal stretch at 1-19 is a signal peptide; the sequence is MANPVPSACCVVLAAVVVV. Residues 23-103 enclose the Ig-like C2-type domain; the sequence is RHSQQDSHIQ…HLKYQTYLRV (81 aa). Cysteines 44 and 87 form a disulfide. 4 N-linked (GlcNAc...) asparagine glycosylation sites follow: N58, N68, N140, and N188. Fibronectin type-III domains follow at residues 106–203 and 204–304; these read PPKE…VKPD and PPES…TEEP. The WSXWS motif motif lies at 288–292; that stretch reads WSDWS. The GPI-anchor amidated aspartate moiety is linked to residue D334. Positions 335–362 are cleaved as a propeptide — removed in mature form; sequence KGAGVGSGAVAVCWTAGLVLAAYGVLFI.

It belongs to the type I cytokine receptor family. Type 3 subfamily. As to quaternary structure, heterotrimer of the alpha subunit, LIFR and IL6ST. As to expression, highly expressed in nervous system. Also found in skeletal muscle.

It is found in the cell membrane. In terms of biological role, binds to CNTF (GPA). The alpha subunit provides the receptor specificity. The protein is Ciliary neurotrophic factor receptor subunit alpha (CNTFR) of Gallus gallus (Chicken).